A 78-amino-acid chain; its full sequence is Beta-defensin 135 (78 aa).

The N-terminal stretch at 1-24 (MATRSVLLALVVLNLLFYVPPGRS) is a signal peptide. 2 disulfide bridges follow: Cys37–Cys64 and Cys48–Cys66.

Belongs to the beta-defensin family.

It localises to the secreted. In terms of biological role, has antibacterial activity. The sequence is that of Beta-defensin 135 (DEFB135) from Pan troglodytes (Chimpanzee).